A 456-amino-acid chain; its full sequence is Major facilitator superfamily domain-containing protein 10 (456 aa).

A run of 3 helical transmembrane segments spans residues 25 to 45 (VIIV…LLLP), 87 to 107 (VLFG…SAPL), and 114 to 136 (YLGR…AVWA). The N-linked (GlcNAc...) asparagine glycan is linked to Asn159. Transmembrane regions (helical) follow at residues 179-199 (AVIG…GAFL), 203-223 (MVPW…FCFL), 278-298 (LVYF…SFLA), 311-328 (KMFF…GTYA), 345-365 (LLLV…TLGL), 366-386 (GLML…TMVS), 403-423 (SLGA…YWLT), and 424-444 (GAQV…LLLW).

The protein belongs to the major facilitator superfamily. As to expression, esxpressed in luminal membrane of renal tubules. Expressed at the surface of eosinophils (at protein level).

The protein localises to the nucleus inner membrane. The protein resides in the cell membrane. In terms of biological role, probable organic anion transporter which may serve as a transporter for some non-steroidal anti-inflammatory drugs (NSAIDs) as well as other organic anions across the luminal membranes of renal proximal tubules at the final excretion step into the urine. The chain is Major facilitator superfamily domain-containing protein 10 (Mfsd10) from Mus musculus (Mouse).